Consider the following 62-residue polypeptide: Sperm protamine P1 (62 aa).

A disordered region spans residues 1–62; the sequence is MARYRRHSRS…RRYSRRGRRR (62 aa).

It belongs to the protamine P1 family. Testis.

It is found in the nucleus. The protein resides in the chromosome. Protamines substitute for histones in the chromatin of sperm during the haploid phase of spermatogenesis. They compact sperm DNA into a highly condensed, stable and inactive complex. The sequence is that of Sperm protamine P1 (PRM1) from Pseudantechinus bilarni (Sandstone dibbler).